Here is a 245-residue protein sequence, read N- to C-terminus: Probable phosphatase YcdX (245 aa).

Residues histidine 7, histidine 9, histidine 15, histidine 40, glutamate 73, histidine 101, histidine 131, aspartate 192, and histidine 194 each contribute to the Zn(2+) site.

The protein belongs to the PHP family. Homotrimer. The cofactor is Zn(2+).

This Escherichia coli (strain K12 / MC4100 / BW2952) protein is Probable phosphatase YcdX.